A 158-amino-acid polypeptide reads, in one-letter code: Cyclic pyranopterin monophosphate synthase (158 aa).

Substrate is bound by residues 75–77 (LCH) and 113–114 (ME). Asp-128 is a catalytic residue.

Belongs to the MoaC family. Homohexamer; trimer of dimers.

The enzyme catalyses (8S)-3',8-cyclo-7,8-dihydroguanosine 5'-triphosphate = cyclic pyranopterin phosphate + diphosphate. The protein operates within cofactor biosynthesis; molybdopterin biosynthesis. In terms of biological role, catalyzes the conversion of (8S)-3',8-cyclo-7,8-dihydroguanosine 5'-triphosphate to cyclic pyranopterin monophosphate (cPMP). The chain is Cyclic pyranopterin monophosphate synthase from Vibrio campbellii (strain ATCC BAA-1116).